We begin with the raw amino-acid sequence, 395 residues long: MVMGDTPSLDEIRKAQRADGPAGILAIGTANPANYVIQAEYPDYYFRITNSEHMTDLKEKFKRMCDKSTIRKRHMHVTEEFLKENPNMCAYMAPSLDARQDIVVVEVPKLGKEAAVKAIKEWGQPKSKITHLVFCTTSGVDMPGADYQLTKLLGLRPSVKRLMMYQQGCFAGGTVLRLAKDLAENNRGARVLVVCSEITAVTFRGPSDTHLDSLVGQALFSDGAAALIVGSDPDTSVGEKPIFEMVSAAQTILPDSDGAIDGHLREVGLTFHLLKDVPGLISKNIEKSLDEAFKPLGISDWNSLFWIAHPGGPAILDQVEIKLGLKEEKMRATRHVMREYGNMSSACVLFILDEMRKKSAKDGVATTGEGLEWGVLFGFGPGLTVETVVLHSVPL.

Position 2 is an N-acetylvaline (V2). C169 is a catalytic residue.

The protein belongs to the thiolase-like superfamily. Chalcone/stilbene synthases family.

It carries out the reaction (E)-4-coumaroyl-CoA + 3 malonyl-CoA + 3 H(+) = 2',4,4',6'-tetrahydroxychalcone + 3 CO2 + 4 CoA. It participates in secondary metabolite biosynthesis; flavonoid biosynthesis. The primary product of this enzyme is 4,2',4',6'-tetrahydroxychalcone (also termed naringenin-chalcone or chalcone) which can under specific conditions spontaneously isomerize into naringenin. The protein is Chalcone synthase (CHS) of Cardamine amara (Large bitter-cress).